The sequence spans 314 residues: Ferrochelatase (314 aa).

Residues histidine 184 and glutamate 259 each contribute to the Fe cation site.

The protein belongs to the ferrochelatase family.

The protein localises to the cytoplasm. The enzyme catalyses heme b + 2 H(+) = protoporphyrin IX + Fe(2+). Its pathway is porphyrin-containing compound metabolism; protoheme biosynthesis; protoheme from protoporphyrin-IX: step 1/1. In terms of biological role, catalyzes the ferrous insertion into protoporphyrin IX. In Chlamydia trachomatis serovar D (strain ATCC VR-885 / DSM 19411 / UW-3/Cx), this protein is Ferrochelatase.